The primary structure comprises 865 residues: Probable beta-glucosidase J (865 aa).

Asp233 is an active-site residue. Asn330, Asn447, Asn503, and Asn764 each carry an N-linked (GlcNAc...) asparagine glycan. A PA14 domain is found at 411–579 (TGQPGYTFRV…DTDTAIQQAV (169 aa)).

This sequence belongs to the glycosyl hydrolase 3 family.

The protein resides in the secreted. The catalysed reaction is Hydrolysis of terminal, non-reducing beta-D-glucosyl residues with release of beta-D-glucose.. It participates in glycan metabolism; cellulose degradation. Functionally, beta-glucosidases are one of a number of cellulolytic enzymes involved in the degradation of cellulosic biomass. Catalyzes the last step releasing glucose from the inhibitory cellobiose. This chain is Probable beta-glucosidase J (bglJ), found in Aspergillus fumigatus (strain ATCC MYA-4609 / CBS 101355 / FGSC A1100 / Af293) (Neosartorya fumigata).